The primary structure comprises 312 residues: Glyoxylate/hydroxypyruvate reductase A (312 aa).

Arginine 227 is an active-site residue. The Proton donor role is filled by histidine 275.

Belongs to the D-isomer specific 2-hydroxyacid dehydrogenase family. GhrA subfamily.

Its subcellular location is the cytoplasm. The catalysed reaction is glycolate + NADP(+) = glyoxylate + NADPH + H(+). It carries out the reaction (R)-glycerate + NAD(+) = 3-hydroxypyruvate + NADH + H(+). It catalyses the reaction (R)-glycerate + NADP(+) = 3-hydroxypyruvate + NADPH + H(+). Catalyzes the NADPH-dependent reduction of glyoxylate and hydroxypyruvate into glycolate and glycerate, respectively. This chain is Glyoxylate/hydroxypyruvate reductase A, found in Escherichia coli (strain ATCC 8739 / DSM 1576 / NBRC 3972 / NCIMB 8545 / WDCM 00012 / Crooks).